Consider the following 70-residue polypeptide: Putative RNA-binding protein YbcJ (70 aa).

One can recognise an S4 RNA-binding domain in the interval 12 to 68 (VELCDLLKLEGWSESGAQAKIAIAEGQVKVDGAVETRKRCKIVAGQTVSFAGHSVQV).

In terms of assembly, in pull-down experiments interacts with CedA.

Functionally, its structure and the presence of conserved basic residues indicates that it probably binds RNA. The sequence is that of Putative RNA-binding protein YbcJ (ybcJ) from Escherichia coli (strain K12).